The chain runs to 318 residues: Ubiquitin-like domain-containing CTD phosphatase 1 (318 aa).

In terms of domain architecture, Ubiquitin-like spans 3 to 81; the sequence is LSLIIKWGGQ…IMMMGTREES (79 aa). Residues 133 to 294 form the FCP1 homology domain; the sequence is PREGKKLLVL…LKLSQYLKEI (162 aa). Aspartate 143, aspartate 145, and aspartate 253 together coordinate Mg(2+).

Mg(2+) serves as cofactor.

It localises to the nucleus. It catalyses the reaction O-phospho-L-seryl-[protein] + H2O = L-seryl-[protein] + phosphate. The catalysed reaction is O-phospho-L-threonyl-[protein] + H2O = L-threonyl-[protein] + phosphate. In terms of biological role, dephosphorylates 26S nuclear proteasomes, thereby decreasing their proteolytic activity. Recruited to the 19S regulatory particle of the 26S proteasome where it dephosphorylates 19S component psmc2 which impairs psmc2 ATPase activity and disrupts 26S proteasome assembly. Has also been reported to stimulate the proteolytic activity of the 26S proteasome. The sequence is that of Ubiquitin-like domain-containing CTD phosphatase 1 (ublcp1) from Xenopus tropicalis (Western clawed frog).